The primary structure comprises 643 residues: 1-deoxy-D-xylulose-5-phosphate synthase (643 aa).

Thiamine diphosphate is bound by residues His78 and 119–121 (AHS). Residue Asp150 coordinates Mg(2+). Residues 151–152 (GS), Asn179, Tyr288, and Glu370 each bind thiamine diphosphate. Asn179 serves as a coordination point for Mg(2+).

The protein belongs to the transketolase family. DXPS subfamily. As to quaternary structure, homodimer. The cofactor is Mg(2+). Thiamine diphosphate serves as cofactor.

The catalysed reaction is D-glyceraldehyde 3-phosphate + pyruvate + H(+) = 1-deoxy-D-xylulose 5-phosphate + CO2. It participates in metabolic intermediate biosynthesis; 1-deoxy-D-xylulose 5-phosphate biosynthesis; 1-deoxy-D-xylulose 5-phosphate from D-glyceraldehyde 3-phosphate and pyruvate: step 1/1. Its function is as follows. Catalyzes the acyloin condensation reaction between C atoms 2 and 3 of pyruvate and glyceraldehyde 3-phosphate to yield 1-deoxy-D-xylulose-5-phosphate (DXP). This is 1-deoxy-D-xylulose-5-phosphate synthase from Brucella abortus (strain 2308).